The primary structure comprises 270 residues: Zinc transporter ZupT (270 aa).

The next 8 membrane-spanning stretches (helical) occupy residues 8–28 (ILVV…GGFI), 40–60 (LTFA…VELL), 78–98 (WIAI…DYLV), 131–151 (ILFA…TFAA), 162–182 (IALA…VPLY), 192–212 (LFYS…AMFF), 216–236 (FLTP…MVFI), and 250–270 (HHHI…IVLI). The Fe(2+) site is built by Asn-141 and Glu-144. Glu-144 and His-169 together coordinate Zn(2+). Fe(2+)-binding residues include Asn-170, Glu-173, and Glu-202. Glu-173 contributes to the Zn(2+) binding site.

Belongs to the ZIP transporter (TC 2.A.5) family. ZupT subfamily.

It localises to the cell membrane. It catalyses the reaction Zn(2+)(in) = Zn(2+)(out). Its function is as follows. Mediates zinc uptake. May also transport other divalent cations. This Akkermansia muciniphila (strain ATCC BAA-835 / DSM 22959 / JCM 33894 / BCRC 81048 / CCUG 64013 / CIP 107961 / Muc) protein is Zinc transporter ZupT.